The sequence spans 682 residues: Potassium-transporting ATPase ATP-binding subunit (682 aa).

Helical transmembrane passes span 34–54 (PVMF…IAMA), 62–82 (ALFS…ANFA), 219–239 (IALT…TATL), and 254–274 (VLVA…LSAI). Asp307 functions as the 4-aspartylphosphate intermediate in the catalytic mechanism. Residues Asp344, Glu348, 377 to 384 (FTAQSRMS), and Lys395 contribute to the ATP site. Residues Asp518 and Asp522 each contribute to the Mg(2+) site. Helical transmembrane passes span 588–608 (FAII…LNIM), 616–636 (AILS…PLAL), and 656–676 (IYGL…DLLL).

It belongs to the cation transport ATPase (P-type) (TC 3.A.3) family. Type IA subfamily. In terms of assembly, the system is composed of three essential subunits: KdpA, KdpB and KdpC.

The protein localises to the cell inner membrane. It carries out the reaction K(+)(out) + ATP + H2O = K(+)(in) + ADP + phosphate + H(+). In terms of biological role, part of the high-affinity ATP-driven potassium transport (or Kdp) system, which catalyzes the hydrolysis of ATP coupled with the electrogenic transport of potassium into the cytoplasm. This subunit is responsible for energy coupling to the transport system and for the release of the potassium ions to the cytoplasm. The polypeptide is Potassium-transporting ATPase ATP-binding subunit (Escherichia coli O9:H4 (strain HS)).